Consider the following 53-residue polypeptide: Small ribosomal subunit protein uS14 (53 aa).

Positions 17, 20, 36, and 39 each coordinate Zn(2+).

It belongs to the universal ribosomal protein uS14 family. Zinc-binding uS14 subfamily. Part of the 30S ribosomal subunit. Zn(2+) is required as a cofactor.

Binds 16S rRNA, required for the assembly of 30S particles. This is Small ribosomal subunit protein uS14 from Methanococcus maripaludis (strain DSM 14266 / JCM 13030 / NBRC 101832 / S2 / LL).